Here is a 138-residue protein sequence, read N- to C-terminus: Integration host factor subunit beta (138 aa).

A compositionally biased stretch (basic and acidic residues) spans Lys-81 to Gly-98. The segment at Lys-81–Arg-138 is disordered.

It belongs to the bacterial histone-like protein family. As to quaternary structure, heterodimer of an alpha and a beta chain.

This protein is one of the two subunits of integration host factor, a specific DNA-binding protein that functions in genetic recombination as well as in transcriptional and translational control. The protein is Integration host factor subunit beta of Ralstonia nicotianae (strain ATCC BAA-1114 / GMI1000) (Ralstonia solanacearum).